Here is a 542-residue protein sequence, read N- to C-terminus: Carboxypeptidase Y homolog A (542 aa).

A signal peptide spans 1-17; that stretch reads MRVLPATLLVGAASAAV. A propeptide spanning residues 18-123 is cleaved from the precursor; the sequence is PPLQQVLGRP…KLEAYDLRIK (106 aa). Cystine bridges form between Cys178–Cys418, Cys312–Cys326, Cys336–Cys359, Cys343–Cys352, and Cys381–Cys388. N-linked (GlcNAc...) asparagine glycosylation is present at Asn209. The active site involves Ser265. The active site involves Asp457. Asn508 carries N-linked (GlcNAc...) asparagine glycosylation. His519 is a catalytic residue.

The protein belongs to the peptidase S10 family.

It localises to the vacuole. It carries out the reaction Release of a C-terminal amino acid with broad specificity.. Vacuolar carboxypeptidase involved in degradation of small peptides. Digests preferentially peptides containing an aliphatic or hydrophobic residue in P1' position, as well as methionine, leucine or phenylalanine in P1 position of ester substrate. The protein is Carboxypeptidase Y homolog A (cpyA) of Aspergillus oryzae (strain ATCC 42149 / RIB 40) (Yellow koji mold).